The following is a 477-amino-acid chain: Zinc metalloproteinase/disintegrin (477 aa).

The N-terminal stretch at 1-20 is a signal peptide; that stretch reads MIEVLLVTICLAAFPYQGSS. A propeptide spanning residues 21-187 is cleaved from the precursor; it reads IILESGNVND…PIKKASQSNL (167 aa). A Peptidase M12B domain is found at 193 to 389; it reads RYIELFLVVD…DNPQCILNKQ (197 aa). Positions 196 and 280 each coordinate Ca(2+). Cystine bridges form between cysteine 304–cysteine 384, cysteine 344–cysteine 368, and cysteine 346–cysteine 351. Histidine 329 is a Zn(2+) binding site. Glutamate 330 is an active-site residue. Positions 333 and 339 each coordinate Zn(2+). Ca(2+)-binding residues include cysteine 384 and asparagine 387. Residues 390 to 404 constitute a propeptide that is removed on maturation; that stretch reads LRTDTVSTPVSGKNF. Residues 396 to 477 form the Disintegrin domain; sequence STPVSGKNFG…AGCPRNPFHA (82 aa). Intrachain disulfides connect cysteine 410–cysteine 425, cysteine 412–cysteine 420, cysteine 419–cysteine 442, cysteine 433–cysteine 439, cysteine 438–cysteine 463, and cysteine 451–cysteine 470. The short motif at 455–457 is the Cell attachment site element; that stretch reads RGD.

It belongs to the venom metalloproteinase (M12B) family. P-II subfamily. P-IIa sub-subfamily. As to quaternary structure, monomer. The cofactor is Zn(2+). As to expression, expressed by the venom gland.

The protein localises to the secreted. Its activity is regulated as follows. Inhibited by 1,10-phenanthroline and EDTA. Functionally, impairs hemostasis in the envenomed animal. Does not exhibit detectable plasminogen activating activity. Has hemagglutinating activity on red blood cells. Cleaves insulin B chain at '38-Ala-|-Leu-39' and '40-Tyr-|-Leu-41' bonds. In terms of biological role, this recombinant protein shows high inhibitory activity on collagen-induced platelet aggregation. The chain is Zinc metalloproteinase/disintegrin from Bothrops jararaca (Jararaca).